Reading from the N-terminus, the 234-residue chain is Glycerol uptake facilitator protein (234 aa).

6 consecutive transmembrane segments (helical) span residues 9 to 29, 37 to 57, 61 to 81, 83 to 103, 135 to 155, and 159 to 179; these read FLGT…VVLP, GWIV…FVSG, PAYL…LPWA, VLPY…LVWL, LISE…LGLY, and AGIG…SLGG. Positions 65–67 match the NPA 1 motif; that stretch reads NPA. The NPA 2 signature appears at 186–188; the sequence is NPA. Residues 214-234 traverse the membrane as a helical segment; that stretch reads WIPVVGPVIGAALAVLVFSLF.

This sequence belongs to the MIP/aquaporin (TC 1.A.8) family.

The protein resides in the cell membrane. It catalyses the reaction glycerol(in) = glycerol(out). Its function is as follows. Mediates glycerol diffusion across the cytoplasmic membrane via a pore-type mechanism. This is Glycerol uptake facilitator protein (glpF) from Streptococcus pneumoniae serotype 4 (strain ATCC BAA-334 / TIGR4).